Consider the following 346-residue polypeptide: 2,5-dichlorohydroquinone reductive dechlorinase (346 aa).

Residues 43–154 enclose the GST N-terminal domain; that stretch reads PRFELFHFVF…YLCDALSGGT (112 aa). Residues 189–335 enclose the GST C-terminal domain; sequence DRRPESMQAV…AIIQWPGHPP (147 aa).

This sequence belongs to the GST superfamily.

It catalyses the reaction 2,5-dichlorohydroquinone + 2 glutathione = chlorohydroquinone + glutathione disulfide + chloride + H(+). The catalysed reaction is chlorohydroquinone + 2 glutathione = hydroquinone + glutathione disulfide + chloride + H(+). The protein operates within xenobiotic degradation; gamma-hexachlorocyclohexane degradation. In terms of biological role, catalyzes the degradation of 2,5-dichlorohydroquinone (2,5-DCHQ) into hydroquinone (HQ) via chlorohydroquinone (CHQ). Is involved in the degradation pathway that allows S.japonicum UT26 to grow on gamma-hexachlorocyclohexane (gamma-HCH or lindane) as the sole source of carbon and energy. However, the conversion of CHQ to HQ by LinD seems not to be essential for this degradation pathway, because the conversion rate of CHQ to HQ is much lower than that of 2,5-DCHQ to CHQ. CHQ is more efficiently degraded by LinE in strain UT26. The sequence is that of 2,5-dichlorohydroquinone reductive dechlorinase from Sphingobium indicum (strain DSM 16413 / CCM 7287 / MTCC 6362 / UT26 / NBRC 101211 / UT26S) (Sphingobium japonicum).